Here is an 89-residue protein sequence, read N- to C-terminus: Putative regulatory protein PCC8801_0196 (89 aa).

It belongs to the RemA family.

This is Putative regulatory protein PCC8801_0196 from Rippkaea orientalis (strain PCC 8801 / RF-1) (Cyanothece sp. (strain PCC 8801)).